Here is a 337-residue protein sequence, read N- to C-terminus: DNA-directed RNA polymerase subunit alpha (337 aa).

Residues 1-231 (MRNITTSAYT…KQLSVFDKIT (231 aa)) form an alpha N-terminal domain (alpha-NTD) region. The tract at residues 248-337 (NTKLLQNITD…IAELKAQNEG (90 aa)) is alpha C-terminal domain (alpha-CTD).

Belongs to the RNA polymerase alpha chain family. Homodimer. The RNAP catalytic core consists of 2 alpha, 1 beta, 1 beta' and 1 omega subunit. When a sigma factor is associated with the core the holoenzyme is formed, which can initiate transcription.

It carries out the reaction RNA(n) + a ribonucleoside 5'-triphosphate = RNA(n+1) + diphosphate. Functionally, DNA-dependent RNA polymerase catalyzes the transcription of DNA into RNA using the four ribonucleoside triphosphates as substrates. This Campylobacter jejuni subsp. jejuni serotype O:6 (strain 81116 / NCTC 11828) protein is DNA-directed RNA polymerase subunit alpha.